The primary structure comprises 380 residues: Lipid-A-disaccharide synthase (380 aa).

The protein belongs to the LpxB family.

It catalyses the reaction a lipid X + a UDP-2-N,3-O-bis[(3R)-3-hydroxyacyl]-alpha-D-glucosamine = a lipid A disaccharide + UDP + H(+). Its pathway is bacterial outer membrane biogenesis; LPS lipid A biosynthesis. Condensation of UDP-2,3-diacylglucosamine and 2,3-diacylglucosamine-1-phosphate to form lipid A disaccharide, a precursor of lipid A, a phosphorylated glycolipid that anchors the lipopolysaccharide to the outer membrane of the cell. This Azotobacter vinelandii (strain DJ / ATCC BAA-1303) protein is Lipid-A-disaccharide synthase.